Reading from the N-terminus, the 72-residue chain is Small, acid-soluble spore protein C (72 aa).

This sequence belongs to the alpha/beta-type SASP family.

Its function is as follows. SASP are bound to spore DNA. They are double-stranded DNA-binding proteins that cause DNA to change to an a-like conformation. They protect the DNA backbone from chemical and enzymatic cleavage and are thus involved in dormant spore's high resistance to UV light. In Priestia megaterium (Bacillus megaterium), this protein is Small, acid-soluble spore protein C (sasP-C).